A 113-amino-acid chain; its full sequence is Iron-sulfur cluster insertion protein ErpA (113 aa).

Iron-sulfur cluster is bound by residues C41, C105, and C107.

This sequence belongs to the HesB/IscA family. In terms of assembly, homodimer. Iron-sulfur cluster is required as a cofactor.

Its function is as follows. Required for insertion of 4Fe-4S clusters for at least IspG. The protein is Iron-sulfur cluster insertion protein ErpA of Colwellia psychrerythraea (strain 34H / ATCC BAA-681) (Vibrio psychroerythus).